The chain runs to 325 residues: Tetraacyldisaccharide 4'-kinase (325 aa).

ATP is bound at residue 55-62; it reads TAGGNGKT.

The protein belongs to the LpxK family.

It catalyses the reaction a lipid A disaccharide + ATP = a lipid IVA + ADP + H(+). Its pathway is glycolipid biosynthesis; lipid IV(A) biosynthesis; lipid IV(A) from (3R)-3-hydroxytetradecanoyl-[acyl-carrier-protein] and UDP-N-acetyl-alpha-D-glucosamine: step 6/6. Functionally, transfers the gamma-phosphate of ATP to the 4'-position of a tetraacyldisaccharide 1-phosphate intermediate (termed DS-1-P) to form tetraacyldisaccharide 1,4'-bis-phosphate (lipid IVA). The polypeptide is Tetraacyldisaccharide 4'-kinase (Salmonella paratyphi B (strain ATCC BAA-1250 / SPB7)).